We begin with the raw amino-acid sequence, 160 residues long: Nucleotide-binding protein VP1617 (160 aa).

The protein belongs to the YajQ family.

Nucleotide-binding protein. In Vibrio parahaemolyticus serotype O3:K6 (strain RIMD 2210633), this protein is Nucleotide-binding protein VP1617.